We begin with the raw amino-acid sequence, 653 residues long: Asparagine--tRNA ligase, cytoplasmic (653 aa).

It belongs to the class-II aminoacyl-tRNA synthetase family.

Its subcellular location is the cytoplasm. It carries out the reaction tRNA(Asn) + L-asparagine + ATP = L-asparaginyl-tRNA(Asn) + AMP + diphosphate + H(+). This Dictyostelium discoideum (Social amoeba) protein is Asparagine--tRNA ligase, cytoplasmic (asnS1).